Here is a 2315-residue protein sequence, read N- to C-terminus: Receptor-type tyrosine-protein phosphatase zeta (2315 aa).

The N-terminal stretch at 1–24 is a signal peptide; sequence MRILKRFLACIQLLCVCRLDWANG. The Extracellular segment spans residues 25–1636; that stretch reads YYRQQRKLVE…LAEGLESEKK (1612 aa). Positions 36-300 constitute an Alpha-carbonic anhydrase domain; it reads IGWSYTGALN…KFSRQVFSSY (265 aa). 2 cysteine pairs are disulfide-bonded: cysteine 56–cysteine 240 and cysteine 133–cysteine 264. N-linked (GlcNAc...) asparagine glycosylation is found at asparagine 105, asparagine 134, asparagine 223, asparagine 232, asparagine 324, and asparagine 381. The region spanning 314 to 413 is the Fibronectin type-III domain; that stretch reads EPENVQADPE…LIVDMPTDNP (100 aa). Disordered regions lie at residues 442–462 and 477–507; these read IVNP…PQIS and AKTN…SQPV. Residues 496–507 show a composition bias toward polar residues; the sequence is PNTSLNSTSQPV. N-linked (GlcNAc...) asparagine glycosylation is found at asparagine 497, asparagine 501, and asparagine 552. An O-linked (Xyl...) (chondroitin sulfate) serine glycan is attached at serine 587. N-linked (GlcNAc...) asparagine glycans are attached at residues asparagine 602 and asparagine 629. A disordered region spans residues 628–650; sequence RNASEDSTSSGSEESLKDPSMEG. Residue serine 637 is modified to Phosphoserine; alternate. Serine 637 carries O-linked (Xyl...) (chondroitin sulfate) serine; alternate glycosylation. Serine 639 bears the Phosphoserine mark. An N-linked (GlcNAc...) asparagine glycan is attached at asparagine 677. Serine 997 is a glycosylation site (O-linked (Xyl...) (chondroitin sulfate) serine). N-linked (GlcNAc...) asparagine glycosylation is found at asparagine 1017, asparagine 1050, asparagine 1082, and asparagine 1122. Residues 1123-1138 are compositionally biased toward polar residues; sequence FSVQPTHTVSQASGDT. Disordered stretches follow at residues 1123 to 1160, 1397 to 1523, 1543 to 1572, and 1584 to 1621; these read FSVQ…SSEM, KATS…EEND, LTSD…SFAD, and AGDS…NSSH. Over residues 1145–1159 the composition is skewed to low complexity; the sequence is SANSEPASSDPASSE. Over residues 1417–1432 the composition is skewed to acidic residues; that stretch reads EDGDTDDDGDDDDDDR. Over residues 1450 to 1465 the composition is skewed to basic and acidic residues; the sequence is ESQEKVMNDSDTHENS. Residue asparagine 1457 is glycosylated (N-linked (GlcNAc...) asparagine). Polar residues-rich tracts occupy residues 1466-1479 and 1487-1513; these read LMDQ…SLSE and VTSV…GLSQ. O-linked (Xyl...) (chondroitin sulfate) serine glycans are attached at residues serine 1549 and serine 1551. 2 stretches are compositionally biased toward polar residues: residues 1554 to 1572 and 1593 to 1606; these read GTSD…SFAD and FPQS…SENS. N-linked (GlcNAc...) asparagine glycosylation is present at asparagine 1562. The N-linked (GlcNAc...) asparagine glycan is linked to asparagine 1618. A helical membrane pass occupies residues 1637-1662; sequence AVIPLVIVSALTFICLVVLVGILIYW. Residues 1663–2315 are Cytoplasmic-facing; the sequence is RKCFQTAHFY…NIAESLESLV (653 aa). Phosphothreonine is present on residues threonine 1684 and threonine 1687. 2 consecutive Tyrosine-protein phosphatase domains span residues 1717–1992 and 2023–2282; these read FTEE…LVEA and LEKQ…ILSL. Residues aspartate 1901, 1933–1939, and glutamine 1977 contribute to the substrate site; that span reads CSAGVGR. The active-site Phosphocysteine intermediate is the cysteine 1933. The residue at position 2055 (serine 2055) is a Phosphoserine.

The protein belongs to the protein-tyrosine phosphatase family. Receptor class 5 subfamily. The carbonic-anhydrase like domain interacts with CNTN1 (contactin). Interacts with PTN. Interaction with PTN promotes formation of homooligomers; oligomerization impairs phosphatase activity. Interacts (via chondroitin sulfate chains) with MDK (via C-terminal); this interaction is inhibited by PTN; this interaction promotes neuronal migration. Specifically expressed in the central nervous system, where it is localized in the Purkinje cell layer of the cerebellum, the dentate gyrus, and the subependymal layer of the anterior horn of the lateral ventricle. Developmentally regulated in the brain.

The protein resides in the cell membrane. Its subcellular location is the secreted. The enzyme catalyses O-phospho-L-tyrosyl-[protein] + H2O = L-tyrosyl-[protein] + phosphate. Functionally, protein tyrosine phosphatase that negatively regulates oligodendrocyte precursor proliferation in the embryonic spinal cord. Required for normal differentiation of the precursor cells into mature, fully myelinating oligodendrocytes. May play a role in protecting oligondendrocytes against apoptosis. May play a role in the establishment of contextual memory, probably via the dephosphorylation of proteins that are part of important signaling cascades. This Homo sapiens (Human) protein is Receptor-type tyrosine-protein phosphatase zeta (PTPRZ1).